Reading from the N-terminus, the 528-residue chain is Ribonuclease Y (528 aa).

A helical membrane pass occupies residues 15–35 (SLFFLALICGSIIGYFLYSFF). The 61-residue stretch at 217–277 (NISVVNIPNE…IRREIAKKTL (61 aa)) folds into the KH domain. One can recognise an HD domain in the interval 343 to 436 (VLKHSLEVAF…VAIADTLSSA (94 aa)).

It belongs to the RNase Y family.

Its subcellular location is the cell membrane. Functionally, endoribonuclease that initiates mRNA decay. The polypeptide is Ribonuclease Y (Aster yellows witches'-broom phytoplasma (strain AYWB)).